Reading from the N-terminus, the 449-residue chain is Phosphoglucosamine mutase (449 aa).

The active-site Phosphoserine intermediate is serine 104. Positions 104, 243, 245, and 247 each coordinate Mg(2+). Serine 104 is subject to Phosphoserine.

The protein belongs to the phosphohexose mutase family. It depends on Mg(2+) as a cofactor. Activated by phosphorylation.

It carries out the reaction alpha-D-glucosamine 1-phosphate = D-glucosamine 6-phosphate. Catalyzes the conversion of glucosamine-6-phosphate to glucosamine-1-phosphate. This chain is Phosphoglucosamine mutase, found in Xanthomonas campestris pv. campestris (strain 8004).